Consider the following 258-residue polypeptide: Isoprenyl transferase (258 aa).

The active site involves Asp-38. Asp-38 is a Mg(2+) binding site. Substrate contacts are provided by residues 39 to 42 (GNGR), Trp-43, Arg-51, His-55, and 83 to 85 (STE). Asn-86 serves as the catalytic Proton acceptor. Substrate contacts are provided by residues Trp-87, Arg-89, Arg-206, and 212–214 (RIS). Residue Glu-225 coordinates Mg(2+).

This sequence belongs to the UPP synthase family. As to quaternary structure, homodimer. The cofactor is Mg(2+).

In terms of biological role, catalyzes the condensation of isopentenyl diphosphate (IPP) with allylic pyrophosphates generating different type of terpenoids. The polypeptide is Isoprenyl transferase (Bacillus anthracis).